We begin with the raw amino-acid sequence, 121 residues long: MVHMHITAWALGLILFFVAYSLYSAGRKGKGVHMGLRLMYIIIIVTGFMLYMGIMKTATSNMHMWYGLKMIAGILVIGGMEMVLVKMSKNKATGAVWGLFIVALVAVFYLGLKLPIGWQVF.

The next 4 membrane-spanning stretches (helical) occupy residues 6 to 26 (ITAW…YSAG), 38 to 58 (LMYI…MKTA), 65 to 85 (WYGL…MVLV), and 92 to 112 (ATGA…YLGL).

It belongs to the UPF0344 family.

The protein localises to the cell membrane. The polypeptide is UPF0344 protein BT9727_1053 (Bacillus thuringiensis subsp. konkukian (strain 97-27)).